A 401-amino-acid chain; its full sequence is Chorismate synthase (401 aa).

R40 and R46 together coordinate NADP(+). FMN contacts are provided by residues 135 to 137, 256 to 257, G300, 315 to 319, and R341; these read RAS, QA, and KPIST.

Belongs to the chorismate synthase family. Homotetramer. The cofactor is FMNH2.

The enzyme catalyses 5-O-(1-carboxyvinyl)-3-phosphoshikimate = chorismate + phosphate. The protein operates within metabolic intermediate biosynthesis; chorismate biosynthesis; chorismate from D-erythrose 4-phosphate and phosphoenolpyruvate: step 7/7. Catalyzes the anti-1,4-elimination of the C-3 phosphate and the C-6 proR hydrogen from 5-enolpyruvylshikimate-3-phosphate (EPSP) to yield chorismate, which is the branch point compound that serves as the starting substrate for the three terminal pathways of aromatic amino acid biosynthesis. This reaction introduces a second double bond into the aromatic ring system. This Mycobacterium bovis (strain BCG / Pasteur 1173P2) protein is Chorismate synthase.